Reading from the N-terminus, the 399-residue chain is Lymphoid enhancer-binding factor 1 (399 aa).

Over residues 1–14 the composition is skewed to gly residues; the sequence is MPQLSGGGGGGGGD. Positions 1–62 are CTNNB1-binding; sequence MPQLSGGGGG…IKSSLVNESE (62 aa). Positions 1–104 are disordered; it reads MPQLSGGGGG…KHPDGGLYNK (104 aa). 2 stretches are compositionally biased toward basic and acidic residues: residues 24 to 45 and 82 to 98; these read IPFK…SHPE and PYHD…KHPD. A Glycyl lysine isopeptide (Lys-Gly) (interchain with G-Cter in SUMO) cross-link involves residue Lys27. At Ser132 the chain carries Phosphoserine. A Phosphothreonine; by NLK modification is found at Thr155. Residue Ser166 is modified to Phosphoserine; by NLK. Disordered stretches follow at residues 166–192 and 268–298; these read SPGS…PAPD and VKQE…KRPH. Lys269 participates in a covalent cross-link: Glycyl lysine isopeptide (Lys-Gly) (interchain with G-Cter in SUMO). Positions 269 to 296 are enriched in basic and acidic residues; that stretch reads KQEHPHTDSDLMHVKPQHEQRKEQEPKR. A DNA-binding region (HMG box) is located at residues 299-367; that stretch reads IKKPLNAFML…LHMQLYPGWS (69 aa). The interval 369–399 is disordered; it reads RDNYGKKKKRKREKLQESASGTGPRMTAAYI.

It belongs to the TCF/LEF family. In terms of assembly, binds the armadillo repeat of CTNNB1 and forms a stable complex. Interacts with EP300, TLE1 and PIASG. Binds ALYREF/THOC4, MDFI and MDFIC. Interacts with NLK. Interacts with DAZAP2. In terms of processing, phosphorylated at Thr-155 and/or Ser-166 by NLK. Phosphorylation by NLK at these sites represses LEF1-mediated transcriptional activation of target genes of the canonical Wnt signaling pathway. In terms of tissue distribution, detected in thymus. Not detected in normal colon, but highly expressed in colon cancer biopsies and colon cancer cell lines. Expressed in several pancreatic tumors and weakly expressed in normal pancreatic tissue. Isoforms 1 and 5 are detected in several pancreatic cell lines.

The protein localises to the nucleus. Transcription factor that binds DNA in a sequence-specific manner. Participates in the Wnt signaling pathway. Activates transcription of target genes in the presence of CTNNB1 and EP300. PIAG antagonizes both Wnt-dependent and Wnt-independent activation by LEF1. TLE1, TLE2, TLE3 and TLE4 repress transactivation mediated by LEF1 and CTNNB1. Regulates T-cell receptor alpha enhancer function. Required for IL17A expressing gamma-delta T-cell maturation and development, via binding to regulator loci of BLK to modulate expression. Acts as a positive regulator of odontoblast differentiation during mesenchymal tooth germ formation, expression is repressed during the bell stage by MSX1-mediated inhibition of CTNNB1 signaling. May play a role in hair cell differentiation and follicle morphogenesis. Its function is as follows. Transcriptionally activates MYC and CCND1 expression and enhances proliferation of pancreatic tumor cells. Functionally, lacks the CTNNB1 interaction domain and may therefore be an antagonist for Wnt signaling. In terms of biological role, transcriptionally activates the fibronectin promoter, binds to and represses transcription from the E-cadherin promoter in a CTNNB1-independent manner, and is involved in reducing cellular aggregation and increasing cell migration of pancreatic cancer cells. The chain is Lymphoid enhancer-binding factor 1 from Homo sapiens (Human).